Here is a 153-residue protein sequence, read N- to C-terminus: UPF0260 protein YcgN (153 aa).

Belongs to the UPF0260 family.

The protein is UPF0260 protein YcgN of Escherichia coli O6:K15:H31 (strain 536 / UPEC).